A 132-amino-acid polypeptide reads, in one-letter code: U-scoloptoxin(05)-Er3a (132 aa).

Positions 1–19 are cleaved as a signal peptide; that stretch reads MRSWFVFVALLAVVFLPSS.

It belongs to the scoloptoxin-05 family. In terms of processing, contains 5 disulfide bonds. As to expression, expressed by the venom gland.

Its subcellular location is the secreted. The chain is U-scoloptoxin(05)-Er3a from Ethmostigmus rubripes (Giant centipede).